The primary structure comprises 221 residues: Small ribosomal subunit protein uS3 (221 aa).

The 70-residue stretch at 39-108 (IRKFVKKRSY…NVIINIVEVK (70 aa)) folds into the KH type-2 domain.

Belongs to the universal ribosomal protein uS3 family. In terms of assembly, part of the 30S ribosomal subunit. Forms a tight complex with proteins S10 and S14.

Binds the lower part of the 30S subunit head. Binds mRNA in the 70S ribosome, positioning it for translation. This is Small ribosomal subunit protein uS3 from Clostridium novyi (strain NT).